Consider the following 78-residue polypeptide: Conotoxin 5 (78 aa).

An N-terminal signal peptide occupies residues 1–22 (MKLTCMMIVTVLFLTAWIFITA). The propeptide occupies 23 to 49 (DNSRNGIENLPRMRRHEMKNPKASKLN). Cystine bridges form between Cys-53/Cys-69, Cys-60/Cys-73, and Cys-68/Cys-77.

This sequence belongs to the conotoxin O1 superfamily. Expressed by the venom duct.

The protein localises to the secreted. The polypeptide is Conotoxin 5 (Conus imperialis (Imperial cone)).